The following is a 168-amino-acid chain: Small ribosomal subunit protein uS5 (168 aa).

The S5 DRBM domain occupies 11-74; the sequence is YSEKVVKIDR…EAAKKHLVKI (64 aa).

The protein belongs to the universal ribosomal protein uS5 family. In terms of assembly, part of the 30S ribosomal subunit. Contacts proteins S4 and S8.

Functionally, with S4 and S12 plays an important role in translational accuracy. Located at the back of the 30S subunit body where it stabilizes the conformation of the head with respect to the body. This Leptospira borgpetersenii serovar Hardjo-bovis (strain JB197) protein is Small ribosomal subunit protein uS5.